Consider the following 197-residue polypeptide: UDP-N-acetylglucosamine transferase subunit ALG13 (197 aa).

This sequence belongs to the glycosyltransferase 28 family. As to quaternary structure, heterodimer with ALG14 to form a functional enzyme.

The protein localises to the endoplasmic reticulum. It carries out the reaction an N-acetyl-alpha-D-glucosaminyl-diphospho-di-trans,poly-cis-dolichol + UDP-N-acetyl-alpha-D-glucosamine = an N,N'-diacetylchitobiosyl-diphospho-di-trans,poly-cis-dolichol + UDP + H(+). Involved in protein N-glycosylation. Essential for the second step of the dolichol-linked oligosaccharide pathway. This Kluyveromyces lactis (strain ATCC 8585 / CBS 2359 / DSM 70799 / NBRC 1267 / NRRL Y-1140 / WM37) (Yeast) protein is UDP-N-acetylglucosamine transferase subunit ALG13 (ALG13).